The primary structure comprises 581 residues: Alpha-amylase 2 (581 aa).

The N-terminal stretch at 1–24 is a signal peptide; the sequence is MNYRRNICLRIGWMLLFAFIPAYA. A disulfide bond links cysteine 56 and cysteine 64. Tryptophan 109 serves as a coordination point for substrate. Asparagine 147 is a binding site for Ca(2+). Cysteine 176 and cysteine 191 form a disulfide bridge. Residue aspartate 202 coordinates Ca(2+). Position 231 (arginine 231) interacts with substrate. Ca(2+)-binding residues include aspartate 233, histidine 237, and glutamate 257. Aspartate 233 functions as the Nucleophile in the catalytic mechanism. A substrate-binding site is contributed by 236–237; sequence KH. Catalysis depends on glutamate 257, which acts as the Proton donor. Glycine 261 contacts substrate. An intrachain disulfide couples cysteine 267 to cysteine 311. Asparagine 291 carries N-linked (GlcNAc...) asparagine glycosylation. Residue aspartate 325 participates in substrate binding. Asparagine 332 is a glycosylation site (N-linked (GlcNAc...) asparagine). Arginine 372 contributes to the substrate binding site. Residue serine 551 is the site of GPI-anchor amidated serine attachment. Residues 552 to 581 constitute a propeptide, removed in mature form; the sequence is EAKTIRSFTKLKLFILLIAVPFALPMIILI.

This sequence belongs to the glycosyl hydrolase 13 family. Ca(2+) serves as cofactor.

Its subcellular location is the cell membrane. It carries out the reaction Endohydrolysis of (1-&gt;4)-alpha-D-glucosidic linkages in polysaccharides containing three or more (1-&gt;4)-alpha-linked D-glucose units.. In Schizosaccharomyces pombe (strain 972 / ATCC 24843) (Fission yeast), this protein is Alpha-amylase 2 (aah2).